Reading from the N-terminus, the 160-residue chain is Lipoprotein signal peptidase (160 aa).

A run of 2 helical transmembrane segments spans residues 60-80 (IEWL…AFFI) and 84-104 (LPFL…AGTV). Residues Asp118 and Asp132 contribute to the active site. The helical transmembrane segment at 128-148 (FNIADSCLTVGVIGLLLLYIV) threads the bilayer.

This sequence belongs to the peptidase A8 family.

The protein resides in the cell membrane. It catalyses the reaction Release of signal peptides from bacterial membrane prolipoproteins. Hydrolyzes -Xaa-Yaa-Zaa-|-(S,diacylglyceryl)Cys-, in which Xaa is hydrophobic (preferably Leu), and Yaa (Ala or Ser) and Zaa (Gly or Ala) have small, neutral side chains.. It participates in protein modification; lipoprotein biosynthesis (signal peptide cleavage). In terms of biological role, this protein specifically catalyzes the removal of signal peptides from prolipoproteins. The chain is Lipoprotein signal peptidase from Dehalococcoides mccartyi (strain CBDB1).